The following is a 284-amino-acid chain: Tryptophan 2,3-dioxygenase (284 aa).

Residues 51–55 (FIIQH), Tyr113, and Arg117 contribute to the substrate site. His240 is a binding site for heme. Thr254 provides a ligand contact to substrate.

The protein belongs to the tryptophan 2,3-dioxygenase family. In terms of assembly, homotetramer. The cofactor is heme.

The catalysed reaction is L-tryptophan + O2 = N-formyl-L-kynurenine. It functions in the pathway amino-acid degradation; L-tryptophan degradation via kynurenine pathway; L-kynurenine from L-tryptophan: step 1/2. Heme-dependent dioxygenase that catalyzes the oxidative cleavage of the L-tryptophan (L-Trp) pyrrole ring and converts L-tryptophan to N-formyl-L-kynurenine. Catalyzes the oxidative cleavage of the indole moiety. This is Tryptophan 2,3-dioxygenase from Arthrobacter sp. (strain FB24).